A 404-amino-acid chain; its full sequence is Glycosylated lysosomal membrane protein (404 aa).

An N-terminal signal peptide occupies residues 1–35; sequence MRGSVERGWGWGHCASSPLLLWTLLLFAAPFGLLG. The Lumenal segment spans residues 36–371; sequence EKTRQLSLEV…GRLVPTSPGH (336 aa). N-linked (GlcNAc...) asparagine glycans are attached at residues Asn65, Asn134, Asn159, Asn186, and Asn229. A helical transmembrane segment spans residues 372–392; the sequence is HGSALGAPGLMLLGGGLVLLL. Topologically, residues 393–404 are cytoplasmic; that stretch reads HHRKYSEYQSIN. A Lysosomal targeting motif motif is present at residues 400 to 404; the sequence is YQSIN.

Belongs to the GLMP family. In terms of assembly, interacts (via lumenal domain) with lysosomal protein MFSD1; the interaction starts while both proteins are still in the endoplasmic reticulum and is required for stabilization of MFSD1 in lysosomes but has no direct effect on its targeting to lysosomes or transporter activity. In terms of processing, highly N-glycosylated. N-glycosylation is essential for GLMP stability and for MFSD1 lysosomal localization.

The protein resides in the lysosome membrane. Required to protect lysosomal transporter MFSD1 from lysosomal proteolysis and for MFSD1 lysosomal localization. This chain is Glycosylated lysosomal membrane protein, found in Pongo abelii (Sumatran orangutan).